The sequence spans 941 residues: UvrABC system protein A (941 aa).

An ATP-binding site is contributed by 31–38 (GLSGSGKS). Residues 253–280 (CPICGYSMRELEPRLFSFNNPAGACPTC) form a C4-type zinc finger. ABC transporter domains follow at residues 310–587 (WDRR…PESL) and 607–937 (ANPE…RFLK). Residue 640–647 (GVSGSGKS) coordinates ATP. The C4-type zinc-finger motif lies at 740 to 766 (CEACQGDGVIKVEMHFLPDIYVPCDQC).

The protein belongs to the ABC transporter superfamily. UvrA family. As to quaternary structure, forms a heterotetramer with UvrB during the search for lesions.

It is found in the cytoplasm. In terms of biological role, the UvrABC repair system catalyzes the recognition and processing of DNA lesions. UvrA is an ATPase and a DNA-binding protein. A damage recognition complex composed of 2 UvrA and 2 UvrB subunits scans DNA for abnormalities. When the presence of a lesion has been verified by UvrB, the UvrA molecules dissociate. The chain is UvrABC system protein A from Salmonella typhi.